A 203-amino-acid polypeptide reads, in one-letter code: Urease accessory protein UreG (203 aa).

Residue 14-21 (GPVGSGKT) coordinates GTP.

This sequence belongs to the SIMIBI class G3E GTPase family. UreG subfamily. As to quaternary structure, homodimer. UreD, UreF and UreG form a complex that acts as a GTP-hydrolysis-dependent molecular chaperone, activating the urease apoprotein by helping to assemble the nickel containing metallocenter of UreC. The UreE protein probably delivers the nickel.

The protein localises to the cytoplasm. Its function is as follows. Facilitates the functional incorporation of the urease nickel metallocenter. This process requires GTP hydrolysis, probably effectuated by UreG. This is Urease accessory protein UreG from Rhizobium meliloti (strain 1021) (Ensifer meliloti).